Consider the following 340-residue polypeptide: UDP-3-O-acylglucosamine N-acyltransferase (340 aa).

The active-site Proton acceptor is His247.

The protein belongs to the transferase hexapeptide repeat family. LpxD subfamily. Homotrimer.

The catalysed reaction is a UDP-3-O-[(3R)-3-hydroxyacyl]-alpha-D-glucosamine + a (3R)-hydroxyacyl-[ACP] = a UDP-2-N,3-O-bis[(3R)-3-hydroxyacyl]-alpha-D-glucosamine + holo-[ACP] + H(+). It functions in the pathway bacterial outer membrane biogenesis; LPS lipid A biosynthesis. Catalyzes the N-acylation of UDP-3-O-acylglucosamine using 3-hydroxyacyl-ACP as the acyl donor. Is involved in the biosynthesis of lipid A, a phosphorylated glycolipid that anchors the lipopolysaccharide to the outer membrane of the cell. This is UDP-3-O-acylglucosamine N-acyltransferase from Caulobacter sp. (strain K31).